A 224-amino-acid chain; its full sequence is 4'-phosphopantetheinyl transferase (224 aa).

Mg(2+)-binding residues include Asp-107, Glu-109, and Glu-151. A peptidyl carrier protein binding region spans residues 158–189 (GKGLSLPLDSFSVRLKDDGHVSIELPDGHEPC).

It belongs to the P-Pant transferase superfamily. Gsp/Sfp/HetI/AcpT family. Mg(2+) serves as cofactor.

It carries out the reaction apo-[peptidyl-carrier protein] + CoA = holo-[peptidyl-carrier protein] + adenosine 3',5'-bisphosphate + H(+). In terms of biological role, may activate the peptidyl carrier protein (PCP) domains of surfactin synthetase SRF1/2/3 and iturin A synthetase, by transferring the 4'-phosphopantetheinyl moiety of coenzyme A (CoA) to a serine residue. Required for the coproduction of the lipopeptide antibiotics, iturin A and surfactin. This chain is 4'-phosphopantetheinyl transferase (lpa-14), found in Bacillus subtilis.